A 364-amino-acid chain; its full sequence is DNA polymerase IV (364 aa).

The 185-residue stretch at 14–198 (IIHIDMDAFF…LPIEKFHGVG (185 aa)) folds into the UmuC domain. Residues D18 and D116 each contribute to the Mg(2+) site. Residue E117 is part of the active site.

This sequence belongs to the DNA polymerase type-Y family. Monomer. It depends on Mg(2+) as a cofactor.

Its subcellular location is the cytoplasm. It carries out the reaction DNA(n) + a 2'-deoxyribonucleoside 5'-triphosphate = DNA(n+1) + diphosphate. Functionally, poorly processive, error-prone DNA polymerase involved in untargeted mutagenesis. Copies undamaged DNA at stalled replication forks, which arise in vivo from mismatched or misaligned primer ends. These misaligned primers can be extended by PolIV. Exhibits no 3'-5' exonuclease (proofreading) activity. May be involved in translesional synthesis, in conjunction with the beta clamp from PolIII. The sequence is that of DNA polymerase IV from Streptococcus pyogenes serotype M1.